An 861-amino-acid chain; its full sequence is FO synthase (861 aa).

2 consecutive Radical SAM core domains span residues 69–319 and 528–763; these read ITYS…LQAP and VTYI…LLHP. The interval 70 to 401 is cofG-like; sequence TYSKSVFIPL…PRLLPHVRAL (332 aa). [4Fe-4S] cluster contacts are provided by C83, C87, C90, C542, C546, and C549. Residues 505 to 838 are cofH-like; that stretch reads DGPALDALTR…KPRTTLYGEV (334 aa).

It in the N-terminal section; belongs to the radical SAM superfamily. CofG family. This sequence in the C-terminal section; belongs to the radical SAM superfamily. CofH family. [4Fe-4S] cluster serves as cofactor.

It catalyses the reaction 5-amino-6-(D-ribitylamino)uracil + L-tyrosine + S-adenosyl-L-methionine = 5-amino-5-(4-hydroxybenzyl)-6-(D-ribitylimino)-5,6-dihydrouracil + 2-iminoacetate + 5'-deoxyadenosine + L-methionine + H(+). The catalysed reaction is 5-amino-5-(4-hydroxybenzyl)-6-(D-ribitylimino)-5,6-dihydrouracil + S-adenosyl-L-methionine = 7,8-didemethyl-8-hydroxy-5-deazariboflavin + 5'-deoxyadenosine + L-methionine + NH4(+) + H(+). It functions in the pathway cofactor biosynthesis; coenzyme F0 biosynthesis. Its function is as follows. Catalyzes the radical-mediated synthesis of 7,8-didemethyl-8-hydroxy-5-deazariboflavin (FO) from 5-amino-6-(D-ribitylamino)uracil and L-tyrosine. The sequence is that of FO synthase (fbiC) from Streptomyces avermitilis (strain ATCC 31267 / DSM 46492 / JCM 5070 / NBRC 14893 / NCIMB 12804 / NRRL 8165 / MA-4680).